A 93-amino-acid polypeptide reads, in one-letter code: Small ribosomal subunit protein uS15 (93 aa).

Belongs to the universal ribosomal protein uS15 family. As to quaternary structure, part of the 30S ribosomal subunit. Forms a bridge to the 50S subunit in the 70S ribosome, contacting the 23S rRNA.

In terms of biological role, one of the primary rRNA binding proteins, it binds directly to 16S rRNA where it helps nucleate assembly of the platform of the 30S subunit by binding and bridging several RNA helices of the 16S rRNA. Its function is as follows. Forms an intersubunit bridge (bridge B4) with the 23S rRNA of the 50S subunit in the ribosome. This Anaplasma phagocytophilum (strain HZ) protein is Small ribosomal subunit protein uS15.